The primary structure comprises 230 residues: uncharacterized protein (230 aa).

The next 7 membrane-spanning stretches (helical) occupy residues 8–28 (SLIL…TMAF), 45–65 (SIIL…FIIF), 72–92 (LVLL…FLYL), 109–129 (PFSL…SVIS), 141–161 (IYVL…LLLA), 176–196 (MGIL…AIIF), and 203–223 (IYFL…LILF).

It to P.aeruginosa PA0043 and M.thermoautotrophicum MTH1451.

It is found in the cell membrane. This is an uncharacterized protein from Aquifex aeolicus (strain VF5).